The following is a 272-amino-acid chain: Putative phosphoenolpyruvate synthase regulatory protein (272 aa).

ADP is bound at residue 152-159 (GVSRSGKT).

Belongs to the pyruvate, phosphate/water dikinase regulatory protein family. PSRP subfamily.

It catalyses the reaction [pyruvate, water dikinase] + ADP = [pyruvate, water dikinase]-phosphate + AMP + H(+). The catalysed reaction is [pyruvate, water dikinase]-phosphate + phosphate + H(+) = [pyruvate, water dikinase] + diphosphate. In terms of biological role, bifunctional serine/threonine kinase and phosphorylase involved in the regulation of the phosphoenolpyruvate synthase (PEPS) by catalyzing its phosphorylation/dephosphorylation. The protein is Putative phosphoenolpyruvate synthase regulatory protein of Methylibium petroleiphilum (strain ATCC BAA-1232 / LMG 22953 / PM1).